The primary structure comprises 879 residues: Alanine--tRNA ligase (879 aa).

Residues His-566, His-570, Cys-668, and His-672 each coordinate Zn(2+).

Belongs to the class-II aminoacyl-tRNA synthetase family. It depends on Zn(2+) as a cofactor.

The protein resides in the cytoplasm. The enzyme catalyses tRNA(Ala) + L-alanine + ATP = L-alanyl-tRNA(Ala) + AMP + diphosphate. Catalyzes the attachment of alanine to tRNA(Ala) in a two-step reaction: alanine is first activated by ATP to form Ala-AMP and then transferred to the acceptor end of tRNA(Ala). Also edits incorrectly charged Ser-tRNA(Ala) and Gly-tRNA(Ala) via its editing domain. The protein is Alanine--tRNA ligase of Clostridium perfringens (strain 13 / Type A).